The following is a 463-amino-acid chain: tRNA-2-methylthio-N(6)-dimethylallyladenosine synthase (463 aa).

In terms of domain architecture, MTTase N-terminal spans R19–L135. Positions 28, 64, 98, 170, 174, and 177 each coordinate [4Fe-4S] cluster. The region spanning R156–N393 is the Radical SAM core domain. In terms of domain architecture, TRAM spans Q396–C463.

Belongs to the methylthiotransferase family. MiaB subfamily. Monomer. Requires [4Fe-4S] cluster as cofactor.

The protein localises to the cytoplasm. It catalyses the reaction N(6)-dimethylallyladenosine(37) in tRNA + (sulfur carrier)-SH + AH2 + 2 S-adenosyl-L-methionine = 2-methylsulfanyl-N(6)-dimethylallyladenosine(37) in tRNA + (sulfur carrier)-H + 5'-deoxyadenosine + L-methionine + A + S-adenosyl-L-homocysteine + 2 H(+). Catalyzes the methylthiolation of N6-(dimethylallyl)adenosine (i(6)A), leading to the formation of 2-methylthio-N6-(dimethylallyl)adenosine (ms(2)i(6)A) at position 37 in tRNAs that read codons beginning with uridine. The chain is tRNA-2-methylthio-N(6)-dimethylallyladenosine synthase from Prochlorococcus marinus (strain MIT 9312).